The chain runs to 210 residues: Small ribosomal subunit protein uS4 (210 aa).

A disordered region spans residues 30–49; that stretch reads EKSSLEKRKYPPGLPPKKKG. In terms of domain architecture, S4 RNA-binding spans 99-162; that stretch reads RRLDNVLYRM…QKSAFIEENI (64 aa).

The protein belongs to the universal ribosomal protein uS4 family. In terms of assembly, part of the 30S ribosomal subunit. Contacts protein S5. The interaction surface between S4 and S5 is involved in control of translational fidelity.

Its function is as follows. One of the primary rRNA binding proteins, it binds directly to 16S rRNA where it nucleates assembly of the body of the 30S subunit. Functionally, with S5 and S12 plays an important role in translational accuracy. The chain is Small ribosomal subunit protein uS4 from Leptospira biflexa serovar Patoc (strain Patoc 1 / Ames).